The chain runs to 212 residues: Ribosomal RNA small subunit methyltransferase G (212 aa).

S-adenosyl-L-methionine is bound by residues F78, 96 to 98, 124 to 125, and R141; these read ESS and VE.

This sequence belongs to the methyltransferase superfamily. RNA methyltransferase RsmG family.

Its subcellular location is the cytoplasm. Specifically methylates the N7 position of a guanine in 16S rRNA. The chain is Ribosomal RNA small subunit methyltransferase G from Onion yellows phytoplasma (strain OY-M).